A 206-amino-acid chain; its full sequence is Peptidyl-tRNA hydrolase (206 aa).

Tyr19 is a binding site for tRNA. The Proton acceptor role is filled by His24. Residues Tyr70, Asn72, and Asn118 each contribute to the tRNA site.

This sequence belongs to the PTH family. As to quaternary structure, monomer.

Its subcellular location is the cytoplasm. The catalysed reaction is an N-acyl-L-alpha-aminoacyl-tRNA + H2O = an N-acyl-L-amino acid + a tRNA + H(+). In terms of biological role, hydrolyzes ribosome-free peptidyl-tRNAs (with 1 or more amino acids incorporated), which drop off the ribosome during protein synthesis, or as a result of ribosome stalling. Its function is as follows. Catalyzes the release of premature peptidyl moieties from peptidyl-tRNA molecules trapped in stalled 50S ribosomal subunits, and thus maintains levels of free tRNAs and 50S ribosomes. This Prochlorococcus marinus (strain MIT 9313) protein is Peptidyl-tRNA hydrolase.